The primary structure comprises 440 residues: Chromosome partition protein MukF (440 aa).

Residues 208–236 (LSETSGTLRELQDTLEAAGDKLQANLLRI) are leucine-zipper.

Belongs to the MukF family. As to quaternary structure, interacts, and probably forms a ternary complex, with MukE and MukB via its C-terminal region. The complex formation is stimulated by calcium or magnesium. It is required for an interaction between MukE and MukB.

It localises to the cytoplasm. The protein localises to the nucleoid. Its function is as follows. Involved in chromosome condensation, segregation and cell cycle progression. May participate in facilitating chromosome segregation by condensation DNA from both sides of a centrally located replisome during cell division. Not required for mini-F plasmid partitioning. Probably acts via its interaction with MukB and MukE. Overexpression results in anucleate cells. It has a calcium binding activity. In Escherichia coli O127:H6 (strain E2348/69 / EPEC), this protein is Chromosome partition protein MukF.